Reading from the N-terminus, the 883-residue chain is MTNMAGTATTEFRWKSPPQPPSQEQPISDSDSDSGSDSENHQHRHNDLSNSIFEAYLDCHSSSSPSSIDLAKIQSFLASSSSGAVSCLICLERIKRTDPTWSCTSSCFAVFHLFCIQSWARQCLDLQAARAVTRPSSNPTEPEAVWNCPKCRSSYQKSKIPRRYLCYCGKEEDPPADNPWILPHSCGEVCERPLSNNCGHCCLLLCHPGPCASCPKLVKAKCFCGGVEDVRRCGHKQFSCGDVCERVLDCNIHNCREICHDGECPPCRERAVYKCSCGKVKEEKDCCERVFRCEASCENMLNCGKHVCERGCHAGECGLCPYQGKRSCPCGKRFYQGLSCDVVAPLCGGTCDKVLGCGYHRCPERCHRGPCLETCRIVVTKSCRCGVTKKQVPCHQELACERKCQRVRDCARHACRRRCCDGECPPCSEICGKKLRCRNHKCQSPCHQGPCAPCPIMVTISCACGETHFEVPCGTETNQKPPRCRKLCHITPLCRHGQNQKPHKCHYGACPPCRLLCDEEYPCGHKCKLRCHGPRPPPNREFILKPTKKMLHIQAESTPGSPCPRCPEPVWRPCVGHHLAAEKRMICSDRTQFACDNLCGNPLPCGNHYCSYFCHALDIRSSSLDKRSESCEKCDLRCQKERTPRCQHPCPRRCHPEDCPPCKTLVKRSCHCGAMVHAFECIYYNTMSEKDQMKARSCRGPCHRKLPNCTHLCPEICHPGQCPLPEKCGKKVVVRCKCLTLKKEWVCQDVQAAHRATGSDPKEVPKNQFGVGLLPCDSNCKSKLQVAESVLTQRNVKEIEEKEEPSGKNASKRRKRRGRGQDIQETTRLQKLAVTTKRILMVVMLVAMLAAVSYYGYKGLLWLSDWMNEVEEQRQKSRRYPRI.

The segment covering 1–10 has biased composition (polar residues); the sequence is MTNMAGTATT. Residues 1–44 form a disordered region; the sequence is MTNMAGTATTEFRWKSPPQPPSQEQPISDSDSDSGSDSENHQHR. The segment at 87–152 adopts an RING-type; degenerate zinc-finger fold; that stretch reads CLICLERIKR…EAVWNCPKCR (66 aa). NF-X1-type zinc fingers lie at residues 198 to 216, 250 to 269, 303 to 322, 357 to 377, 410 to 429, 437 to 456, 494 to 515, 523 to 568, 605 to 636, 646 to 664, and 709 to 738; these read CGHCCLLLCHPGPCASCPK, CNIHNCREICHDGECPPCRE, CGKHVCERGCHAGECGLCPY, CGYHRCPERCHRGPCLETCRI, CARHACRRRCCDGECPPCSE, CRNHKCQSPCHQGPCAPCPI, CRHGQNQKPHKCHYGACPPCRL, CGHK…RCPE, CGNHYCSYFCHALDIRSSSLDKRSESCEKCDL, CQHPCPRRCHPEDCPPCKT, and CTHLCPEICHPGQCPLPEKCGKKVVVRCKC. Residues 798 to 824 form a disordered region; the sequence is EIEEKEEPSGKNASKRRKRRGRGQDIQ. A helical membrane pass occupies residues 841–863; the sequence is MVVMLVAMLAAVSYYGYKGLLWL.

The protein belongs to the NFX1 family. Interacts with ADO1/ZTL. As to expression, constitutively expressed in mesophyll and guard cells.

It localises to the nucleus. The protein localises to the membrane. It participates in protein modification; protein ubiquitination. Functionally, probable transcriptional regulator. May mediate E2- or E3-dependent ubiquitination. Required to gate light sensitivity during the night. Regulates the speed of the clock by acting in the feedback loop between CCA1, LHY and APRR1/TOC1. Promotes the expression of CCA1 at night but not by days. This activational effect is enhanced by interaction with ADO1/ZTL. Association with ADO1/ZTL is not leading to the degradation of NFXL2. Confers sensitivity to osmotic stress such as high salinity. Prevents H(2)O(2) production and abscisic acid accumulation. Part of a regulatory network that integrates the biosynthesis and action of abscisic acid, reactive oxygen species and cuticle components. This chain is NF-X1-type zinc finger protein NFXL2 (NFXL2), found in Arabidopsis thaliana (Mouse-ear cress).